The chain runs to 640 residues: Probable serine/threonine-protein kinase samkA (640 aa).

In terms of domain architecture, SAM spans 21–84; the sequence is WNNEKIIKWL…SEFEILKNNY (64 aa). The stretch at 73–100 forms a coiled coil; it reads FKSEFEILKNNYDNNNNNNNNNNNNNNN. The interval 84–165 is disordered; that stretch reads YDNNNNNNNN…INFNSNSNIT (82 aa). Residues 191–437 enclose the Protein kinase domain; sequence YEYVESISLG…SKDLQKLSWF (247 aa). ATP is bound by residues 197–205 and K221; that span reads ISLGVFSVV. D312 serves as the catalytic Proton acceptor. A disordered region spans residues 448–482; sequence QELTKSTTNTTTTTTTTTTPPPPPSPSSSSPSMNE. Residues 453–465 show a composition bias toward low complexity; the sequence is STTNTTTTTTTTT.

The protein belongs to the protein kinase superfamily. Ser/Thr protein kinase family.

It carries out the reaction L-seryl-[protein] + ATP = O-phospho-L-seryl-[protein] + ADP + H(+). It catalyses the reaction L-threonyl-[protein] + ATP = O-phospho-L-threonyl-[protein] + ADP + H(+). This Dictyostelium discoideum (Social amoeba) protein is Probable serine/threonine-protein kinase samkA (samkA).